The following is a 316-amino-acid chain: Pantothenate kinase (316 aa).

95-102 (GSVSVGKS) lines the ATP pocket.

The protein belongs to the prokaryotic pantothenate kinase family.

The protein localises to the cytoplasm. The enzyme catalyses (R)-pantothenate + ATP = (R)-4'-phosphopantothenate + ADP + H(+). Its pathway is cofactor biosynthesis; coenzyme A biosynthesis; CoA from (R)-pantothenate: step 1/5. The sequence is that of Pantothenate kinase from Actinobacillus pleuropneumoniae serotype 7 (strain AP76).